A 274-amino-acid chain; its full sequence is Dermonecrotic toxin LarSicTox-alphaIV1 (274 aa).

Residue histidine 5 is part of the active site. Positions 25 and 27 each coordinate Mg(2+). The Nucleophile role is filled by histidine 41. 2 disulfide bridges follow: cysteine 45-cysteine 51 and cysteine 47-cysteine 192. Aspartate 85 provides a ligand contact to Mg(2+).

This sequence belongs to the arthropod phospholipase D family. Class II subfamily. The cofactor is Mg(2+). As to expression, expressed by the venom gland.

It is found in the secreted. It carries out the reaction an N-(acyl)-sphingosylphosphocholine = an N-(acyl)-sphingosyl-1,3-cyclic phosphate + choline. The catalysed reaction is an N-(acyl)-sphingosylphosphoethanolamine = an N-(acyl)-sphingosyl-1,3-cyclic phosphate + ethanolamine. The enzyme catalyses a 1-acyl-sn-glycero-3-phosphocholine = a 1-acyl-sn-glycero-2,3-cyclic phosphate + choline. It catalyses the reaction a 1-acyl-sn-glycero-3-phosphoethanolamine = a 1-acyl-sn-glycero-2,3-cyclic phosphate + ethanolamine. Dermonecrotic toxins cleave the phosphodiester linkage between the phosphate and headgroup of certain phospholipids (sphingolipid and lysolipid substrates), forming an alcohol (often choline) and a cyclic phosphate. This toxin acts on sphingomyelin (SM). It may also act on ceramide phosphoethanolamine (CPE), lysophosphatidylcholine (LPC) and lysophosphatidylethanolamine (LPE), but not on lysophosphatidylserine (LPS), and lysophosphatidylglycerol (LPG). It acts by transphosphatidylation, releasing exclusively cyclic phosphate products as second products. Induces dermonecrosis, hemolysis, increased vascular permeability, edema, inflammatory response, and platelet aggregation. The protein is Dermonecrotic toxin LarSicTox-alphaIV1 of Loxosceles arizonica (Arizona brown spider).